We begin with the raw amino-acid sequence, 202 residues long: uncharacterized protein (202 aa).

The N-terminal stretch at 1-19 (MRRKNGFSVASVFILCSIA) is a signal peptide. The helical transmembrane segment at 177 to 199 (FLASSSSSFSSFLPSIAIILFFV) threads the bilayer.

The protein localises to the membrane. This is an uncharacterized protein from Caenorhabditis elegans.